The following is a 347-amino-acid chain: MAIRRAQTLLCLSKFKTNFVSGSLHRFSSSSQNSNQFQNVGFIGLGNMGFRMVNNLIRAGYKVTVHDINRDVMKMFTEMGVSSRETPYEVAQDSEVVITMLPSSSHVMDVYTGTNGLLLGENDIRPALFIDSSTIDPQTTRKISLAVSNCNLKEKRDNWEKPVMLDAPVSGGVLAAEAGTLTFMVGGPEDAYLAARPILQSMGRTSIYCGGSGNGSAAKICNNLAMAVSMLGTSEALALGQSLGISASTLTEVLNTSSGRCWSSDAYNPVPGVMKGVPSSRDYNGGFASKLMAKDLNLAAASAEEVGHKSPLISKAQEIYKKMCEEGHETKDFSCVFRHFYNGKDEV.

A mitochondrion-targeting transit peptide spans 1–34 (MAIRRAQTLLCLSKFKTNFVSGSLHRFSSSSQNS). Residues 38–67 (QNVG…TVHD), 101–102 (LP), and threonine 134 each bind NAD(+). The active site involves lysine 219. Lysine 294 contacts NAD(+).

The protein belongs to the HIBADH-related family. 3-hydroxyisobutyrate dehydrogenase subfamily.

It localises to the mitochondrion. It carries out the reaction 3-hydroxy-2-methylpropanoate + NAD(+) = 2-methyl-3-oxopropanoate + NADH + H(+). It participates in amino-acid degradation; L-valine degradation. The sequence is that of Probable 3-hydroxyisobutyrate dehydrogenase, mitochondrial from Arabidopsis thaliana (Mouse-ear cress).